Reading from the N-terminus, the 525-residue chain is Mitogen-activated protein kinase kinase 5 (525 aa).

Positions 59 to 317 constitute a Protein kinase domain; sequence ETEGGFLGKG…CTELLRHPFI (259 aa). ATP-binding positions include 65–73 and Lys88; that span reads LGKGSSGSV. Asp178 (proton acceptor) is an active-site residue. Positions 358–367 are enriched in low complexity; the sequence is SALPLASEGG. Disordered regions lie at residues 358 to 392 and 438 to 468; these read SALP…ERHD and SASV…AQHR.

Belongs to the protein kinase superfamily. STE Ser/Thr protein kinase family. MAP kinase kinase subfamily. Requires Mg(2+) as cofactor.

The catalysed reaction is L-tyrosyl-[protein] + ATP = O-phospho-L-tyrosyl-[protein] + ADP + H(+). The enzyme catalyses L-seryl-[protein] + ATP = O-phospho-L-seryl-[protein] + ADP + H(+). It catalyses the reaction L-threonyl-[protein] + ATP = O-phospho-L-threonyl-[protein] + ADP + H(+). Protein kinase which phosphorylates and activates MPK4 in vitro. In Leishmania mexicana, this protein is Mitogen-activated protein kinase kinase 5.